The chain runs to 404 residues: Cysteine desulfurase IscS (404 aa).

Pyridoxal 5'-phosphate is bound by residues 75–76 (AT), asparagine 155, glutamine 183, and 203–205 (SAH). N6-(pyridoxal phosphate)lysine is present on lysine 206. Threonine 243 contributes to the pyridoxal 5'-phosphate binding site. Cysteine 328 (cysteine persulfide intermediate) is an active-site residue. Cysteine 328 lines the [2Fe-2S] cluster pocket.

This sequence belongs to the class-V pyridoxal-phosphate-dependent aminotransferase family. NifS/IscS subfamily. Homodimer. Forms a heterotetramer with IscU, interacts with other sulfur acceptors. Requires pyridoxal 5'-phosphate as cofactor.

The protein resides in the cytoplasm. The enzyme catalyses (sulfur carrier)-H + L-cysteine = (sulfur carrier)-SH + L-alanine. It functions in the pathway cofactor biosynthesis; iron-sulfur cluster biosynthesis. Its function is as follows. Master enzyme that delivers sulfur to a number of partners involved in Fe-S cluster assembly, tRNA modification or cofactor biosynthesis. Catalyzes the removal of elemental sulfur atoms from cysteine to produce alanine. Functions as a sulfur delivery protein for Fe-S cluster synthesis onto IscU, an Fe-S scaffold assembly protein, as well as other S acceptor proteins. The chain is Cysteine desulfurase IscS from Neisseria meningitidis serogroup A / serotype 4A (strain DSM 15465 / Z2491).